A 344-amino-acid chain; its full sequence is Dihydroorotase (344 aa).

Zn(2+)-binding residues include His-14 and His-16. Substrate is bound by residues 16–18 (HLR) and Asn-42. Residues Lys-100, His-137, and His-175 each contribute to the Zn(2+) site. N6-carboxylysine is present on Lys-100. A substrate-binding site is contributed by His-137. Leu-220 is a substrate binding site. Residue Asp-248 participates in Zn(2+) binding. Residue Asp-248 is part of the active site. The substrate site is built by His-252 and Ala-264.

It belongs to the metallo-dependent hydrolases superfamily. DHOase family. Class II DHOase subfamily. Homodimer. Zn(2+) is required as a cofactor.

The catalysed reaction is (S)-dihydroorotate + H2O = N-carbamoyl-L-aspartate + H(+). Its pathway is pyrimidine metabolism; UMP biosynthesis via de novo pathway; (S)-dihydroorotate from bicarbonate: step 3/3. Its function is as follows. Catalyzes the reversible cyclization of carbamoyl aspartate to dihydroorotate. The chain is Dihydroorotase from Cupriavidus pinatubonensis (strain JMP 134 / LMG 1197) (Cupriavidus necator (strain JMP 134)).